The sequence spans 451 residues: Potassium/sodium uptake protein NtpJ (451 aa).

Helical transmembrane passes span 18-38 (IAAGFFILILFGGSLLTLPFF), 46-66 (HFIDALFTATSAVCVTGLTTL), 78-98 (FLIMTLIEIGGLGFMMIPILF), 133-153 (ILKFAVVIQVIGAVALSVVFI), 162-182 (IWFSIFHAVSSFCNAGFDLLG), 192-212 (VYLIMVVSALIIAGGLGFIVW), 230-250 (VALSVTALLLIGGFILFLITE), 293-313 (LILTMFLMYIGGTSGSTAGGL), 350-370 (ALTLFFVTLSLCVVAIMVLSV), 380-400 (IEYIAFEVFSAFGTVGLTMGL), and 410-430 (LVIISLMYIGRVGIMTVVFSL).

Belongs to the TrkH potassium transport family.

It localises to the cell membrane. Its function is as follows. Mediates electrogenic transport of potassium as well as sodium. Acts probably as a potassium-sodium cotransporter. Major sodium reentry pathway at high pH values. The protein is Potassium/sodium uptake protein NtpJ (ntpJ) of Enterococcus hirae (strain ATCC 9790 / DSM 20160 / JCM 8729 / LMG 6399 / NBRC 3181 / NCIMB 6459 / NCDO 1258 / NCTC 12367 / WDCM 00089 / R).